Here is a 148-residue protein sequence, read N- to C-terminus: Gag-Pol polyprotein (148 aa).

In terms of domain architecture, Integrase catalytic spans 1-64; that stretch reads IPYNPQSQGV…SAGERIIDII (64 aa). Glu12 is a Mg(2+) binding site. The segment at residues 83-130 is a DNA-binding region (integrase-type); sequence FRVYYRDSRDPIWKGPAKLLWKGEGAVVIQDNSDIKVVPRRKVKIIRD.

Homotetramer; may further associate as a homohexadecamer. Part of the pre-integration complex (PIC) which is composed of viral genome, matrix protein, Vpr and integrase. Interacts with human SMARCB1/INI1 and human PSIP1/LEDGF isoform 1. Interacts with human KPNA3; this interaction might play a role in nuclear import of the pre-integration complex. Interacts with human NUP153; this interaction might play a role in nuclear import of the pre-integration complex. Post-translationally, specific enzymatic cleavages by the viral protease yield mature proteins.

In terms of biological role, catalyzes viral DNA integration into the host chromosome, by performing a series of DNA cutting and joining reactions. This enzyme activity takes place after virion entry into a cell and reverse transcription of the RNA genome in dsDNA. The first step in the integration process is 3' processing. This step requires a complex comprising the viral genome, matrix protein, Vpr and integrase. This complex is called the pre-integration complex (PIC). The integrase protein removes 2 nucleotides from each 3' end of the viral DNA, leaving recessed CA OH's at the 3' ends. In the second step, the PIC enters cell nucleus. This process is mediated through integrase and Vpr proteins, and allows the virus to infect a non dividing cell. This ability to enter the nucleus is specific of lentiviruses, other retroviruses cannot and rely on cell division to access cell chromosomes. In the third step, termed strand transfer, the integrase protein joins the previously processed 3' ends to the 5' ends of strands of target cellular DNA at the site of integration. The 5'-ends are produced by integrase-catalyzed staggered cuts, 5 bp apart. A Y-shaped, gapped, recombination intermediate results, with the 5'-ends of the viral DNA strands and the 3' ends of target DNA strands remaining unjoined, flanking a gap of 5 bp. The last step is viral DNA integration into host chromosome. This involves host DNA repair synthesis in which the 5 bp gaps between the unjoined strands are filled in and then ligated. Since this process occurs at both cuts flanking the HIV genome, a 5 bp duplication of host DNA is produced at the ends of HIV-1 integration. Alternatively, Integrase may catalyze the excision of viral DNA just after strand transfer, this is termed disintegration. This chain is Gag-Pol polyprotein (gag-pol), found in Homo sapiens (Human).